The primary structure comprises 269 residues: MTALPRYAVFGNPVAHSKSPQIHQQFALQEGVDIEYERICADIGGFAQAVSTFFETGGCGANVTVPFKQEAFHLADEHSERALAAGAVNTLIPLKNGKLRGDNTDGIGLTNDITQVKNIAIEGKTILLLGAGGAVRGVIPVLKEHRPARIVIANRTRAKAEELAQLFGIEAVPMADVNGGFDIIINGTSGGLNGQIPDIPPDIFQNCALAYDMVYGCAAKPFLDFARQSGAKKTADGLGMLVGQAAASYALWRGFTPDIRPVIEYMKAL.

Shikimate contacts are provided by residues 17–19 and Thr64; that span reads SKS. Lys68 (proton acceptor) is an active-site residue. Glu80 provides a ligand contact to NADP(+). The shikimate site is built by Asn89 and Asp105. NADP(+) is bound by residues 130-134, 154-159, and Met213; these read GAGGA and NRTRAK. Tyr215 serves as a coordination point for shikimate. Gly237 lines the NADP(+) pocket.

It belongs to the shikimate dehydrogenase family. As to quaternary structure, homodimer.

It carries out the reaction shikimate + NADP(+) = 3-dehydroshikimate + NADPH + H(+). It functions in the pathway metabolic intermediate biosynthesis; chorismate biosynthesis; chorismate from D-erythrose 4-phosphate and phosphoenolpyruvate: step 4/7. In terms of biological role, involved in the biosynthesis of the chorismate, which leads to the biosynthesis of aromatic amino acids. Catalyzes the reversible NADPH linked reduction of 3-dehydroshikimate (DHSA) to yield shikimate (SA). In Neisseria meningitidis serogroup B (strain ATCC BAA-335 / MC58), this protein is Shikimate dehydrogenase (NADP(+)).